The chain runs to 698 residues: D-(-)-3-hydroxybutyrate oligomer hydrolase (698 aa).

A signal peptide spans M1–A32. The active-site Charge relay system is S310.

It belongs to the D-(-)-3-hydroxybutyrate oligomer hydrolase family.

It is found in the secreted. The catalysed reaction is (3R)-hydroxybutanoate dimer + H2O = 2 (R)-3-hydroxybutanoate + H(+). Its pathway is lipid metabolism; butanoate metabolism. Participates in the degradation of poly-3-hydroxybutyrate (PHB). It works downstream of poly(3-hydroxybutyrate) depolymerase, hydrolyzing D(-)-3-hydroxybutyrate oligomers of various length (3HB-oligomers) into 3HB-monomers. This Burkholderia thailandensis (strain ATCC 700388 / DSM 13276 / CCUG 48851 / CIP 106301 / E264) protein is D-(-)-3-hydroxybutyrate oligomer hydrolase.